The following is a 424-amino-acid chain: Tyrosine--tRNA ligase 1 (424 aa).

L-tyrosine is bound at residue Tyr37. The 'HIGH' region motif lies at 42–51 (PTADSLHLGH). Residues Tyr175 and Gln179 each coordinate L-tyrosine. The short motif at 235–239 (KFGKT) is the 'KMSKS' region element. An ATP-binding site is contributed by Lys238. One can recognise an S4 RNA-binding domain in the interval 357 to 414 (ADLQQALVNAGLVPSRGQARTMISSNAVAINGEKQSEPEYLFTDSNRLFDRYTLLRRG).

The protein belongs to the class-I aminoacyl-tRNA synthetase family. TyrS type 1 subfamily. In terms of assembly, homodimer.

Its subcellular location is the cytoplasm. The catalysed reaction is tRNA(Tyr) + L-tyrosine + ATP = L-tyrosyl-tRNA(Tyr) + AMP + diphosphate + H(+). In terms of biological role, catalyzes the attachment of tyrosine to tRNA(Tyr) in a two-step reaction: tyrosine is first activated by ATP to form Tyr-AMP and then transferred to the acceptor end of tRNA(Tyr). This chain is Tyrosine--tRNA ligase 1, found in Photorhabdus laumondii subsp. laumondii (strain DSM 15139 / CIP 105565 / TT01) (Photorhabdus luminescens subsp. laumondii).